We begin with the raw amino-acid sequence, 448 residues long: Probable glycine dehydrogenase (decarboxylating) subunit 1 (448 aa).

Belongs to the GcvP family. N-terminal subunit subfamily. The glycine cleavage system is composed of four proteins: P, T, L and H. In this organism, the P 'protein' is a heterodimer of two subunits.

The catalysed reaction is N(6)-[(R)-lipoyl]-L-lysyl-[glycine-cleavage complex H protein] + glycine + H(+) = N(6)-[(R)-S(8)-aminomethyldihydrolipoyl]-L-lysyl-[glycine-cleavage complex H protein] + CO2. The glycine cleavage system catalyzes the degradation of glycine. The P protein binds the alpha-amino group of glycine through its pyridoxal phosphate cofactor; CO(2) is released and the remaining methylamine moiety is then transferred to the lipoamide cofactor of the H protein. The chain is Probable glycine dehydrogenase (decarboxylating) subunit 1 from Exiguobacterium sibiricum (strain DSM 17290 / CCUG 55495 / CIP 109462 / JCM 13490 / 255-15).